The chain runs to 725 residues: Glutamine-dependent NAD(+) synthetase (725 aa).

Residues Val-5–Leu-275 enclose the CN hydrolase domain. Residue Glu-45 is the Proton acceptor; for glutaminase activity of the active site. Residue Lys-114 is the For glutaminase activity of the active site. The active-site Nucleophile; for glutaminase activity is the Cys-175. The interval Tyr-325–Ile-706 is ligase. Pro-355–Ser-362 contributes to the ATP binding site. Ser-357 is a catalytic residue.

This sequence in the C-terminal section; belongs to the NAD synthetase family. Homohexamer.

The enzyme catalyses deamido-NAD(+) + L-glutamine + ATP + H2O = L-glutamate + AMP + diphosphate + NAD(+) + H(+). It functions in the pathway cofactor biosynthesis; NAD(+) biosynthesis; NAD(+) from deamido-NAD(+) (L-Gln route): step 1/1. In terms of biological role, catalyzes the final step of the nicotinamide adenine dinucleotide (NAD) de novo synthesis pathway, the ATP-dependent amidation of deamido-NAD using L-glutamine as a nitrogen source. In Rattus norvegicus (Rat), this protein is Glutamine-dependent NAD(+) synthetase (Nadsyn1).